The following is a 325-amino-acid chain: Leucine carboxyl methyltransferase 1 (325 aa).

Residues Arg79, Gly104, Asp127, 174–175 (DL), and Glu200 contribute to the S-adenosyl-L-methionine site.

It belongs to the methyltransferase superfamily. LCMT family.

The enzyme catalyses [phosphatase 2A protein]-C-terminal L-leucine + S-adenosyl-L-methionine = [phosphatase 2A protein]-C-terminal L-leucine methyl ester + S-adenosyl-L-homocysteine. Methylates the carboxyl group of the C-terminal leucine residue of protein phosphatase 2A catalytic subunits to form alpha-leucine ester residues. This chain is Leucine carboxyl methyltransferase 1 (PPM1), found in Eremothecium gossypii (strain ATCC 10895 / CBS 109.51 / FGSC 9923 / NRRL Y-1056) (Yeast).